Reading from the N-terminus, the 156-residue chain is Zinc metalloproteinase-disintegrin jararin (156 aa).

The Peptidase M12B domain maps to 1–67; it reads FVANRMAHEL…NYYGCLLNEP (67 aa). H8 lines the Zn(2+) pocket. E9 is an active-site residue. Position 12 (H12) interacts with Zn(2+). Intrachain disulfides connect C23–C47, C25–C30, C78–C97, C89–C107, C91–C102, C101–C124, C115–C121, C120–C145, and C133–C152. One can recognise a Disintegrin domain in the interval 75-156; sequence PPFCGNYYPE…GQSGDCPRNS (82 aa). Residues 136–145 are compositionally biased toward basic and acidic residues; the sequence is GRGDNPDDRC. Residues 136–156 form a disordered region; the sequence is GRGDNPDDRCTGQSGDCPRNS. The short motif at 137–139 is the Cell attachment site element; that stretch reads RGD. Over residues 146 to 156 the composition is skewed to polar residues; the sequence is TGQSGDCPRNS.

This sequence belongs to the venom metalloproteinase (M12B) family. P-II subfamily. P-IIb sub-subfamily. In terms of assembly, monomer. Zn(2+) serves as cofactor. As to expression, expressed by the venom gland.

Its subcellular location is the secreted. Its function is as follows. Snake venom zinc metalloproteinase that inhibits ADP-induced platelet aggregation (probably by binding integrin alpha-IIb/beta-3 (ITGA2B/ITGB3)) and degrades fibrinogen. The polypeptide is Zinc metalloproteinase-disintegrin jararin (Bothrops jararaca (Jararaca)).